The following is a 181-amino-acid chain: Isopentenyl-diphosphate Delta-isomerase (181 aa).

Positions 24 and 30 each coordinate Mn(2+). Residues 28 to 168 (LLHLAFSVLL…PDTFSVWFPT (141 aa)) form the Nudix hydrolase domain. The active site involves Cys-68. His-70 is a Mn(2+) binding site. Residue Glu-88 coordinates Mg(2+). The Mn(2+) site is built by Glu-117 and Glu-119. Glu-119 is an active-site residue.

Belongs to the IPP isomerase type 1 family. Mg(2+) is required as a cofactor. Mn(2+) serves as cofactor.

It is found in the cytoplasm. The catalysed reaction is isopentenyl diphosphate = dimethylallyl diphosphate. It participates in isoprenoid biosynthesis; dimethylallyl diphosphate biosynthesis; dimethylallyl diphosphate from isopentenyl diphosphate: step 1/1. Functionally, catalyzes the 1,3-allylic rearrangement of the homoallylic substrate isopentenyl (IPP) to its highly electrophilic allylic isomer, dimethylallyl diphosphate (DMAPP). This chain is Isopentenyl-diphosphate Delta-isomerase, found in Aliivibrio fischeri (strain MJ11) (Vibrio fischeri).